Here is a 413-residue protein sequence, read N- to C-terminus: MEAGQDDAADRLTYEIFSILESKFLFGYGGGGGGETKSLQCAPPVSRGNRVCVLSVDGGARPEDGLLAAAALVRLEAAVQRRAGSKAARLADFFDVAAGSGAGGVLAAMLFARGPCGRPMYSADDALGFLLRRVRRRGWSSRAGGLLRRPAGAFHKVFGELTLRDTVRPVLVPCYDLATRAPFLFSRADAAQSPAYDFRLRDACAATCAPSGGGAAVEASSVDGVTRITAVGSGVALGNPTAAAITHVLNNRREFPAAAGVDNLLVISIGTGEAAGSSSRHRARTPVIARIAAEGASDMVDQAVAMAFGQHRTSNYVRIQGMGVARRRGGGVACGGETAEKAVWVAEAMLQQRNVEAVMFQGRRLAGETNAEKVERFARELIKEHGRRKQHVPPAASGGGGGGLDCHVSKKQP.

One can recognise a PNPLA domain in the interval 54–245; it reads LSVDGGARPE…ALGNPTAAAI (192 aa). The GGXR motif lies at 58–61; the sequence is GGAR. Ser100 serves as the catalytic Nucleophile. The disordered stretch occupies residues 384-413; that stretch reads EHGRRKQHVPPAASGGGGGGLDCHVSKKQP.

The protein belongs to the patatin family.

Its function is as follows. Possesses non-specific lipolytic acyl hydrolase (LAH) activity. Hydrolyzes phospholipids as well as galactolipids. May play a role in disease resistance. The sequence is that of Patatin-like protein 3 (PLP3) from Oryza sativa subsp. indica (Rice).